An 816-amino-acid polypeptide reads, in one-letter code: Oxysterol-binding protein-related protein 1D (816 aa).

One can recognise a PH domain in the interval 92 to 229; sequence GAGVAGIMYK…WVEAFQVAKD (138 aa). Positions 290–321 form a coiled coil; that stretch reads KHIILLDTLRQLETEKIELEATVVDETKEHDS. A disordered region spans residues 340-362; sequence SASDSEADNESQDGADVESDEDD. Acidic residues predominate over residues 344–362; that stretch reads SEADNESQDGADVESDEDD. Positions 735–764 form a coiled coil; it reads NGEYESANAEKLRLEQLQRQARRLQEKGWK.

It belongs to the OSBP family. As to expression, expressed in roots, leaves, stems and flowers.

Functionally, may be involved in the transport of sterols. The polypeptide is Oxysterol-binding protein-related protein 1D (ORP1D) (Arabidopsis thaliana (Mouse-ear cress)).